A 220-amino-acid polypeptide reads, in one-letter code: DNA-directed RNA polymerase subunit alpha (220 aa).

Belongs to the RNA polymerase alpha chain family. As to quaternary structure, in plastids the minimal PEP RNA polymerase catalytic core is composed of four subunits: alpha, beta, beta', and beta''. When a (nuclear-encoded) sigma factor is associated with the core the holoenzyme is formed, which can initiate transcription.

The protein resides in the plastid. The catalysed reaction is RNA(n) + a ribonucleoside 5'-triphosphate = RNA(n+1) + diphosphate. DNA-dependent RNA polymerase catalyzes the transcription of DNA into RNA using the four ribonucleoside triphosphates as substrates. This Euglena longa (Euglenophycean alga) protein is DNA-directed RNA polymerase subunit alpha (rpoA).